A 168-amino-acid polypeptide reads, in one-letter code: Peptidoglycan-associated lipoprotein (168 aa).

The N-terminal stretch at 1–24 (MRRIQSIARSPIAIALFMSLAVAG) is a signal peptide. C25 carries the N-palmitoyl cysteine lipid modification. A lipid anchor (S-diacylglycerol cysteine) is attached at C25. The region spanning 51–167 (QDFTVNVGDR…RAVTVLNGAG (117 aa)) is the OmpA-like domain.

It belongs to the Pal lipoprotein family. In terms of assembly, the Tol-Pal system is composed of five core proteins: the inner membrane proteins TolA, TolQ and TolR, the periplasmic protein TolB and the outer membrane protein Pal. They form a network linking the inner and outer membranes and the peptidoglycan layer. The N-terminus is blocked.

Its subcellular location is the cell outer membrane. Its function is as follows. Part of the Tol-Pal system, which plays a role in outer membrane invagination during cell division and is important for maintaining outer membrane integrity. The polypeptide is Peptidoglycan-associated lipoprotein (Brucella abortus biovar 1 (strain 9-941)).